The following is a 357-amino-acid chain: Glutamate 5-kinase (357 aa).

Lys7 contacts ATP. Substrate contacts are provided by Ser43, Asp130, and Asn142. An ATP-binding site is contributed by 162 to 163; the sequence is TD. Residues 270 to 347 form the PUA domain; that stretch reads QGELTLDAGA…PAAGPSPVVV (78 aa).

Belongs to the glutamate 5-kinase family.

It is found in the cytoplasm. It catalyses the reaction L-glutamate + ATP = L-glutamyl 5-phosphate + ADP. Its pathway is amino-acid biosynthesis; L-proline biosynthesis; L-glutamate 5-semialdehyde from L-glutamate: step 1/2. Catalyzes the transfer of a phosphate group to glutamate to form L-glutamate 5-phosphate. The chain is Glutamate 5-kinase from Parasynechococcus marenigrum (strain WH8102).